The primary structure comprises 160 residues: MTKKKAHKPGSATIALNKRARHEYFIEEEFEAGLALQGWEVKSLRAGKANIGDSYVILKDGEAWLFGANFTPMAVASTHVVCDPTRTRKLLLNQRELDSLYGRINREGYTVVALSLYWKNAWCKVKIGVAKGKKQHDKRSDLKEREWQLDKARIMKHAGR.

The protein belongs to the SmpB family.

Its subcellular location is the cytoplasm. Its function is as follows. Required for rescue of stalled ribosomes mediated by trans-translation. Binds to transfer-messenger RNA (tmRNA), required for stable association of tmRNA with ribosomes. tmRNA and SmpB together mimic tRNA shape, replacing the anticodon stem-loop with SmpB. tmRNA is encoded by the ssrA gene; the 2 termini fold to resemble tRNA(Ala) and it encodes a 'tag peptide', a short internal open reading frame. During trans-translation Ala-aminoacylated tmRNA acts like a tRNA, entering the A-site of stalled ribosomes, displacing the stalled mRNA. The ribosome then switches to translate the ORF on the tmRNA; the nascent peptide is terminated with the 'tag peptide' encoded by the tmRNA and targeted for degradation. The ribosome is freed to recommence translation, which seems to be the essential function of trans-translation. This Salmonella arizonae (strain ATCC BAA-731 / CDC346-86 / RSK2980) protein is SsrA-binding protein.